A 1612-amino-acid polypeptide reads, in one-letter code: DNA (cytosine-5)-methyltransferase PliMCI (1612 aa).

One can recognise a DMAP1-binding domain in the interval 7 to 101; the sequence is CDQVIPPNVR…NGDTKEEASS (95 aa). Positions 87–338 are disordered; it reads TCSPVNGDTK…TAESKQPPLR (252 aa). Residues 94–110 are compositionally biased toward basic and acidic residues; it reads DTKEEASSNGKDDEKAE. Residues 115–131 are compositionally biased toward low complexity; that stretch reads NGTTSNGSTTNGSSGSS. Residues 132–142 show a composition bias toward polar residues; sequence KANGHTNGGYV. A compositionally biased stretch (low complexity) spans 143–154; it reads QSSSQEETGTSQ. Composition is skewed to basic and acidic residues over residues 193-212, 222-232, and 260-289; these read VLGD…KKDV, EESATPDEKTL, and KKEE…KKEE. The CXXC-type zinc finger occupies 626 to 672; the sequence is ASERKKRCGVCEICQAPDCGKCTACKDMIKFGGSGKAKQACKDRRCP. Zn(2+) contacts are provided by cysteine 633, cysteine 636, cysteine 639, cysteine 644, cysteine 647, cysteine 650, cysteine 666, and cysteine 671. Positions 677–708 are disordered; that stretch reads QEADENDIDEMDNSSNKENKDEKKAKKGRKLE. The span at 678–688 shows a compositional bias: acidic residues; sequence EADENDIDEMD. Residues 691 to 708 are compositionally biased toward basic and acidic residues; the sequence is SNKENKDEKKAKKGRKLE. 2 consecutive BAH domains span residues 743 to 871 and 967 to 1089; these read EKIE…EDYE and NYRK…EDPP. A disordered region spans residues 1084 to 1121; it reads CFEDPPSKSRSTRMKGKGKGKGKGKAKGKIAVEKEEEK. The segment covering 1093–1111 has biased composition (basic residues); the sequence is RSTRMKGKGKGKGKGKAKG. Residues 1131–1590 form the SAM-dependent MTase C5-type domain; sequence LKCLDVFAGC…MEIKVCLQTK (460 aa). S-adenosyl-L-methionine is bound by residues 1142-1143, 1160-1161, 1182-1183, and cysteine 1183; these read GL, EK, and DC. Cysteine 1218 is an active-site residue. 2 residues coordinate S-adenosyl-L-methionine: asparagine 1569 and valine 1571.

Belongs to the class I-like SAM-binding methyltransferase superfamily. C5-methyltransferase family.

The protein resides in the nucleus. The catalysed reaction is a 2'-deoxycytidine in DNA + S-adenosyl-L-methionine = a 5-methyl-2'-deoxycytidine in DNA + S-adenosyl-L-homocysteine + H(+). Functionally, methylates CpG residues. The protein is DNA (cytosine-5)-methyltransferase PliMCI (DNMT) of Paracentrotus lividus (Common sea urchin).